The sequence spans 347 residues: Nuclear distribution protein nudE-like 1 (347 aa).

Residues Gln-28 to Val-190 adopt a coiled-coil conformation. The interval Val-56–Ser-166 is self-association. An interaction with KATNB1 region spans residues Asp-64–Glu-189. The interval Tyr-114–Ile-133 is required for interaction with PAFAH1B1. An interaction with CENPF region spans residues Arg-175–Val-347. The segment at Glu-189 to Val-256 is interaction with YWHAE. The interval Thr-191–Val-347 is interaction with NEFL. Positions Ala-195–Val-256 are interaction with KATNA1. Ser-215 is modified (phosphoserine). Thr-219 is modified (phosphothreonine; by CDK1 and MAPK1). A Phosphoserine modification is found at Ser-231. An interaction with DISC1 region spans residues Thr-241–Gln-280. At Ser-242 the chain carries Phosphoserine; by CDK1. Thr-245 carries the phosphothreonine; by CDK1 and MAPK1 modification. Residues Val-256 to Val-291 form a required for localization to the centrosome and interaction with dynein, dynactin, tubulin gamma, PCM1 and PCNT region. Residue Cys-273 is the site of S-palmitoyl cysteine; by ZDHHC2, ZDHHC3 and ZDHHC7 attachment. The disordered stretch occupies residues Lys-314–Val-347. Ser-346 carries the post-translational modification Phosphoserine.

The protein belongs to the nudE family. As to quaternary structure, self-associates. Interacts with DISC1, dynein, dynactin, tubulin gamma, KATNA1, KATNB1, microtubules, PAFAH1B1, PCM1, PCNT, and YWHAE. Interacts directly with NEFL and indirectly with NEFH. Interacts (via C-terminus) with CENPF. Interacts with ZNF365. Interacts with PLEKHM1 (via N- and C-terminus). Interacts with GTP-bound RAB9A; the interaction may lead to RAB9A-dynein motor tethering. Post-translationally, phosphorylated in mitosis. Can be phosphorylated by CDK1, CDK5 and MAPK1. Phosphorylation by CDK5 promotes interaction with KATNA1 and YWHAE. Palmitoylation at Cys-273 reduces affinity for dynein.

The protein resides in the cytoplasm. The protein localises to the cytoskeleton. It is found in the microtubule organizing center. Its subcellular location is the centrosome. It localises to the chromosome. The protein resides in the centromere. The protein localises to the kinetochore. It is found in the spindle. In terms of biological role, required for organization of the cellular microtubule array and microtubule anchoring at the centrosome. May regulate microtubule organization at least in part by targeting the microtubule severing protein KATNA1 to the centrosome. Also positively regulates the activity of the minus-end directed microtubule motor protein dynein. May enhance dynein-mediated microtubule sliding by targeting dynein to the microtubule plus ends. Required for several dynein- and microtubule-dependent processes such as the maintenance of Golgi integrity, the centripetal motion of secretory vesicles and the coupling of the nucleus and centrosome. Also required during brain development for the migration of newly formed neurons from the ventricular/subventricular zone toward the cortical plate. Required for mitosis in some cell types but appears to be dispensible for mitosis in cortical neuronal progenitors, which instead requires NDE1. Facilitates the polymerization of neurofilaments from the individual subunits NEFH and NEFL. Positively regulates lysosome peripheral distribution and ruffled border formation in osteoclasts. Plays a role, together with DISC1, in the regulation of neurite outgrowth. May act as a RAB9A/B effector that tethers RAB9-associated late endosomes to the dynein motor for their retrograde transport to the trans-Golgi network. This Macaca fascicularis (Crab-eating macaque) protein is Nuclear distribution protein nudE-like 1 (NDEL1).